Consider the following 181-residue polypeptide: UPF0397 protein STER_0346 (181 aa).

The next 5 helical transmembrane spans lie at 11-31 (ATGI…IPIF), 45-65 (LFSV…GHAL), 72-92 (GNIS…IGLF), 109-129 (IWFN…VTPI), and 147-167 (FVAG…LLAI).

It belongs to the UPF0397 family.

It localises to the cell membrane. The polypeptide is UPF0397 protein STER_0346 (Streptococcus thermophilus (strain ATCC BAA-491 / LMD-9)).